Consider the following 280-residue polypeptide: 3-deoxy-manno-octulosonate cytidylyltransferase (280 aa).

The protein belongs to the KdsB family.

It is found in the cytoplasm. It carries out the reaction 3-deoxy-alpha-D-manno-oct-2-ulosonate + CTP = CMP-3-deoxy-beta-D-manno-octulosonate + diphosphate. It participates in nucleotide-sugar biosynthesis; CMP-3-deoxy-D-manno-octulosonate biosynthesis; CMP-3-deoxy-D-manno-octulosonate from 3-deoxy-D-manno-octulosonate and CTP: step 1/1. Its pathway is bacterial outer membrane biogenesis; lipopolysaccharide biosynthesis. Functionally, activates KDO (a required 8-carbon sugar) for incorporation into bacterial lipopolysaccharide in Gram-negative bacteria. This is 3-deoxy-manno-octulosonate cytidylyltransferase from Colwellia psychrerythraea (strain 34H / ATCC BAA-681) (Vibrio psychroerythus).